A 688-amino-acid polypeptide reads, in one-letter code: Potassium-transporting ATPase ATP-binding subunit (688 aa).

4 helical membrane passes run 34 to 54 (PVMFVVYLGSWLTTLIWLAIL), 62 to 82 (AMFTGSIALWLWFTVLFANMA), 219 to 239 (VALTILLVALTIVFLLATATL), and 260 to 280 (VLVALLVCLIPTTIGGLLSAI). Asp313 functions as the 4-aspartylphosphate intermediate in the catalytic mechanism. Residues Asp350, Glu354, 383 to 390 (FSAQTRMS), and Lys401 each bind ATP. The Mg(2+) site is built by Asp524 and Asp528. 3 consecutive transmembrane segments (helical) span residues 594 to 614 (FAIIPAAFAATYPQLNALNIM), 622 to 642 (AILSAVIFNALVIVFLIPLAL), and 662 to 682 (IYGLGGLLVPFVGIKLIDLLL).

It belongs to the cation transport ATPase (P-type) (TC 3.A.3) family. Type IA subfamily. In terms of assembly, the system is composed of three essential subunits: KdpA, KdpB and KdpC.

The protein resides in the cell inner membrane. The catalysed reaction is K(+)(out) + ATP + H2O = K(+)(in) + ADP + phosphate + H(+). Part of the high-affinity ATP-driven potassium transport (or Kdp) system, which catalyzes the hydrolysis of ATP coupled with the electrogenic transport of potassium into the cytoplasm. This subunit is responsible for energy coupling to the transport system and for the release of the potassium ions to the cytoplasm. The sequence is that of Potassium-transporting ATPase ATP-binding subunit from Yersinia pseudotuberculosis serotype O:1b (strain IP 31758).